Reading from the N-terminus, the 108-residue chain is Phosphoribosyl-ATP pyrophosphatase (108 aa).

The protein belongs to the PRA-PH family.

It localises to the cytoplasm. It carries out the reaction 1-(5-phospho-beta-D-ribosyl)-ATP + H2O = 1-(5-phospho-beta-D-ribosyl)-5'-AMP + diphosphate + H(+). Its pathway is amino-acid biosynthesis; L-histidine biosynthesis; L-histidine from 5-phospho-alpha-D-ribose 1-diphosphate: step 2/9. The sequence is that of Phosphoribosyl-ATP pyrophosphatase from Dechloromonas aromatica (strain RCB).